The primary structure comprises 382 residues: Bifunctional enzyme IspD/IspF (382 aa).

Positions 1–225 are 2-C-methyl-D-erythritol 4-phosphate cytidylyltransferase; that stretch reads MTFSVVIVAA…EHLAGVARVT (225 aa). The segment at 226–382 is 2-C-methyl-D-erythritol 2,4-cyclodiphosphate synthase; sequence RVGQGFDAHR…SAVVAVETPA (157 aa). Residues Asp-232 and His-234 each contribute to the a divalent metal cation site. Residues 232 to 234 and 258 to 259 each bind 4-CDP-2-C-methyl-D-erythritol 2-phosphate; these read DAH and HS. Residue His-266 participates in a divalent metal cation binding. 4-CDP-2-C-methyl-D-erythritol 2-phosphate-binding positions include 280 to 282, 356 to 359, Phe-363, and Arg-366; these read DIG and TTTE.

This sequence in the N-terminal section; belongs to the IspD/TarI cytidylyltransferase family. IspD subfamily. The protein in the C-terminal section; belongs to the IspF family. Requires a divalent metal cation as cofactor.

It carries out the reaction 2-C-methyl-D-erythritol 4-phosphate + CTP + H(+) = 4-CDP-2-C-methyl-D-erythritol + diphosphate. The enzyme catalyses 4-CDP-2-C-methyl-D-erythritol 2-phosphate = 2-C-methyl-D-erythritol 2,4-cyclic diphosphate + CMP. The protein operates within isoprenoid biosynthesis; isopentenyl diphosphate biosynthesis via DXP pathway; isopentenyl diphosphate from 1-deoxy-D-xylulose 5-phosphate: step 2/6. It participates in isoprenoid biosynthesis; isopentenyl diphosphate biosynthesis via DXP pathway; isopentenyl diphosphate from 1-deoxy-D-xylulose 5-phosphate: step 4/6. Functionally, bifunctional enzyme that catalyzes the formation of 4-diphosphocytidyl-2-C-methyl-D-erythritol from CTP and 2-C-methyl-D-erythritol 4-phosphate (MEP) (IspD), and catalyzes the conversion of 4-diphosphocytidyl-2-C-methyl-D-erythritol 2-phosphate (CDP-ME2P) to 2-C-methyl-D-erythritol 2,4-cyclodiphosphate (ME-CPP) with a corresponding release of cytidine 5-monophosphate (CMP) (IspF). This is Bifunctional enzyme IspD/IspF from Caulobacter vibrioides (strain ATCC 19089 / CIP 103742 / CB 15) (Caulobacter crescentus).